Reading from the N-terminus, the 195-residue chain is Recombination protein RecR (195 aa).

Residues 53 to 68 (CTICHNLDTISPCSIC) form a C4-type zinc finger. One can recognise a Toprim domain in the interval 76–171 (SIICVVEELG…KVTRLACGIP (96 aa)).

Belongs to the RecR family.

May play a role in DNA repair. It seems to be involved in an RecBC-independent recombinational process of DNA repair. It may act with RecF and RecO. This Anaplasma marginale (strain St. Maries) protein is Recombination protein RecR.